The chain runs to 638 residues: 3D-(3,5/4)-trihydroxycyclohexane-1,2-dione hydrolase (638 aa).

Residue Glu-67 coordinates thiamine diphosphate. The segment at 442–523 (SLPGDLQRLW…INIMLFDNSG (82 aa)) is thiamine pyrophosphate binding. Residues Asp-494 and Asn-521 each coordinate Mg(2+).

It belongs to the TPP enzyme family. Mg(2+) serves as cofactor. Requires thiamine diphosphate as cofactor.

It catalyses the reaction 3D-3,5/4-trihydroxycyclohexane-1,2-dione + H2O = 5-deoxy-D-glucuronate + H(+). Its pathway is polyol metabolism; myo-inositol degradation into acetyl-CoA; acetyl-CoA from myo-inositol: step 3/7. In terms of biological role, involved in the cleavage of the C1-C2 bond of 3D-(3,5/4)-trihydroxycyclohexane-1,2-dione (THcHDO) to yield 5-deoxy-glucuronate (5DG). The polypeptide is 3D-(3,5/4)-trihydroxycyclohexane-1,2-dione hydrolase (Listeria innocua serovar 6a (strain ATCC BAA-680 / CLIP 11262)).